The primary structure comprises 235 residues: Ribosomal RNA small subunit methyltransferase G (235 aa).

S-adenosyl-L-methionine-binding positions include Gly75, Phe80, 126 to 127 (AE), and Arg145.

This sequence belongs to the methyltransferase superfamily. RNA methyltransferase RsmG family.

Its subcellular location is the cytoplasm. Its function is as follows. Specifically methylates the N7 position of a guanine in 16S rRNA. The sequence is that of Ribosomal RNA small subunit methyltransferase G from Carboxydothermus hydrogenoformans (strain ATCC BAA-161 / DSM 6008 / Z-2901).